Reading from the N-terminus, the 113-residue chain is Cytochrome c oxidase subunit 7A2-like, mitochondrial (113 aa).

A mitochondrion-targeting transit peptide spans 1–54 (MYYKFSSFTQKLAGAWASEAYTPQGLKPVSTEAPPIIFATPTKLTSSVTAYDYS). Lys-68 is subject to N6-acetyllysine. The helical transmembrane segment at 81–106 (PDQMLYRTTMALTLGGTIYCLIALYM) threads the bilayer.

Belongs to the cytochrome c oxidase VIIa family. Interacts with the mitochondrial respiratory complexes III (CIII) and IV (CIV), promoting their association.

It is found in the mitochondrion inner membrane. It functions in the pathway energy metabolism; oxidative phosphorylation. Assembly factor that mediates the formation of some mitochondrial respiratory supercomplexes (respirasomes), thereby promoting oxidative phosphorylation and energy metabolism. Acts as a molecular adapter that associates with both mitochondrial respiratory complexes III (CIII) and IV (CIV), promoting their association. Mediates the formation of various mitochondrial respiratory supercomplexes, such as MCIII(2)IV(2), composed of two CIII and two CIV, and the CS-respirasome (MCI(1)III(2)IV(2)), composed of one CI, two CIII and two CIV. Not involved in the formation of the canonical respirasome (MCI(1)III(2)IV(1)), composed of one CI, two CIII and one CIV. The formation of different respirasomes is important for cell adaptation to oxygen conditions and prevent metabolic exhaustion: supercomplexes mediated by COX7A2L/SCAF1 are required to maintain oxidative phosphorylation upon low oxygen conditions and promote metabolic rewiring toward glycolysis. This chain is Cytochrome c oxidase subunit 7A2-like, mitochondrial, found in Mus musculus (Mouse).